Consider the following 218-residue polypeptide: Mediator of RNA polymerase II transcription subunit 20 (218 aa).

The protein belongs to the Mediator complex subunit 20 family. Component of the Mediator complex.

The protein localises to the nucleus. Its function is as follows. Component of the Mediator complex, a coactivator involved in the regulated transcription of nearly all RNA polymerase II-dependent genes. Mediator functions as a bridge to convey information from gene-specific regulatory proteins to the basal RNA polymerase II transcription machinery. Mediator is recruited to promoters by direct interactions with regulatory proteins and serves as a scaffold for the assembly of a functional preinitiation complex with RNA polymerase II and the general transcription factors. This is Mediator of RNA polymerase II transcription subunit 20 (MED20) from Anopheles gambiae (African malaria mosquito).